The following is a 419-amino-acid chain: L-rhamnose isomerase (419 aa).

3 residues coordinate Mn(2+): His-262, Asp-294, and Asp-296.

Belongs to the rhamnose isomerase family. As to quaternary structure, homotetramer. It depends on Mn(2+) as a cofactor.

The protein resides in the cytoplasm. The catalysed reaction is L-rhamnopyranose = L-rhamnulose. Its pathway is carbohydrate degradation; L-rhamnose degradation; glycerone phosphate from L-rhamnose: step 1/3. In terms of biological role, catalyzes the interconversion of L-rhamnose and L-rhamnulose. The protein is L-rhamnose isomerase of Escherichia coli (strain 55989 / EAEC).